Reading from the N-terminus, the 222-residue chain is Transmembrane protein 54 (222 aa).

A run of 4 helical transmembrane segments spans residues 22-42, 62-82, 100-120, and 155-175; these read LVLV…HGTV, ILSV…IVLS, ACAL…AMTF, and SSLC…VFAV. The segment at 198–222 is disordered; it reads MMQESPEPVEDPDLPSRTSSGPMTL. Residues 213 to 222 are compositionally biased toward polar residues; sequence SRTSSGPMTL.

Belongs to the TMEM54 family.

It is found in the membrane. The polypeptide is Transmembrane protein 54 (TMEM54) (Bos taurus (Bovine)).